The primary structure comprises 305 residues: tRNA pseudouridine synthase B (305 aa).

Catalysis depends on Asp39, which acts as the Nucleophile.

The protein belongs to the pseudouridine synthase TruB family. Type 1 subfamily.

It carries out the reaction uridine(55) in tRNA = pseudouridine(55) in tRNA. Its function is as follows. Responsible for synthesis of pseudouridine from uracil-55 in the psi GC loop of transfer RNAs. The polypeptide is tRNA pseudouridine synthase B (Staphylococcus epidermidis (strain ATCC 35984 / DSM 28319 / BCRC 17069 / CCUG 31568 / BM 3577 / RP62A)).